A 690-amino-acid chain; its full sequence is NF-kappa-B-repressing factor (690 aa).

The interval 1 to 296 (MEKILHMAEG…FKHIIGEDLV (296 aa)) is active repression domain. Positions 25 to 45 (KPSKGQKRYLSTYDGQNPPKK) match the Nuclear localization signal motif. Disordered stretches follow at residues 27–49 (SKGQ…QAGS), 65–85 (SSSK…DVNG), and 133–160 (YFDS…PPSQ). A Glycyl lysine isopeptide (Lys-Gly) (interchain with G-Cter in SUMO2) cross-link involves residue Lys68. Residues 139-150 (PAPSSTSQQANC) are compositionally biased toward polar residues. Residues 296–388 (VVCQIGMLSY…RVFLQDHCLA (93 aa)) mediate DNA binding. The span at 414–425 (PTYPSVKSSQCH) shows a compositional bias: polar residues. The disordered stretch occupies residues 414–436 (PTYPSVKSSQCHSGSSPKGSGKK). Residue Lys500 forms a Glycyl lysine isopeptide (Lys-Gly) (interchain with G-Cter in SUMO2) linkage. One can recognise a G-patch domain in the interval 551–596 (EDNIGNQLLRKMGWTGGGLGKSGEGIREPISVKEQHKREGLGLDVE). The region spanning 600-664 (KIAKRDIEQI…DRYLVVGRKR (65 aa)) is the R3H domain. Ser618 bears the Phosphoserine mark. Residues Lys666 and Lys674 each participate in a glycyl lysine isopeptide (Lys-Gly) (interchain with G-Cter in SUMO2) cross-link.

Interacts with NF-kappa-B. Interacts with XRN2. Interacts (via G-patch domain) with DHX15; promoting the RNA helicase activity of DHX15.

It is found in the nucleus. It localises to the nucleolus. Functionally, enhances the ATPase activity of DHX15 by acting like a brace that tethers mobile sections of DHX15 together, stabilizing a functional conformation with high RNA affinity of DHX15. Involved in the constitutive silencing of the interferon beta promoter, independently of the virus-induced signals, and in the inhibition of the basal and cytokine-induced iNOS promoter activity. Also involved in the regulation of IL-8 transcription. May also act as a DNA-binding transcription regulator: interacts with a specific negative regulatory element (NRE) 5'-AATTCCTCTGA-3' to mediate transcriptional repression of certain NK-kappa-B responsive genes. This chain is NF-kappa-B-repressing factor (Nkrf), found in Mus musculus (Mouse).